Reading from the N-terminus, the 356-residue chain is MQRADFHFDLPDELIARYPSETRSDCRLLCLDDATGDIAHRRFTDLLTLLAPGDLLVFNDTRVIPARLFGQKASGGRVEMLLERPLDAHRGLAHLRASKAPRPGTELIFEGDVHAVVEARHDALFELRFLGETPMIELLENHGHMPLPPYIDREDELDDRERYQTVYARREGAVAAPTAGLHFDTPLMEALRERGVEMGYVTLHVGAGTFQPVRVDDIREHHMHSEWLEVDETLCRQVEATRARGGRVIAVGTTSVRCLETASQGQEDGHIAPFRGDTDIFIYPGYQWRCVDALITNFHLPESTLLMLVSAFAGYPQVMRAYRAAVAERYAFFSYGDAMFLNRSASSHPFPENSHA.

The protein belongs to the QueA family. As to quaternary structure, monomer.

It localises to the cytoplasm. It carries out the reaction 7-aminomethyl-7-carbaguanosine(34) in tRNA + S-adenosyl-L-methionine = epoxyqueuosine(34) in tRNA + adenine + L-methionine + 2 H(+). The protein operates within tRNA modification; tRNA-queuosine biosynthesis. Functionally, transfers and isomerizes the ribose moiety from AdoMet to the 7-aminomethyl group of 7-deazaguanine (preQ1-tRNA) to give epoxyqueuosine (oQ-tRNA). This is S-adenosylmethionine:tRNA ribosyltransferase-isomerase from Chromohalobacter salexigens (strain ATCC BAA-138 / DSM 3043 / CIP 106854 / NCIMB 13768 / 1H11).